We begin with the raw amino-acid sequence, 431 residues long: Histidine--tRNA ligase (431 aa).

This sequence belongs to the class-II aminoacyl-tRNA synthetase family. As to quaternary structure, homodimer.

It is found in the cytoplasm. The catalysed reaction is tRNA(His) + L-histidine + ATP = L-histidyl-tRNA(His) + AMP + diphosphate + H(+). This is Histidine--tRNA ligase from Neisseria meningitidis serogroup A / serotype 4A (strain DSM 15465 / Z2491).